Here is a 130-residue protein sequence, read N- to C-terminus: Small ribosomal subunit protein uS9 (130 aa).

It belongs to the universal ribosomal protein uS9 family.

In Shewanella halifaxensis (strain HAW-EB4), this protein is Small ribosomal subunit protein uS9.